A 395-amino-acid polypeptide reads, in one-letter code: Calcium sensing receptor, chloroplastic (395 aa).

Low complexity predominate over residues 1 to 12 (MAPVPVSVSATL). Residues 1–27 (MAPVPVSVSATLAPPPAAPPKTTSRSW) form a disordered region. The N-terminal 39 residues, 1-39 (MAPVPVSVSATLAPPPAAPPKTTSRSWERRAPADAAFAA), are a transit peptide targeting the chloroplast. Residues 40–182 (ASSVAGSAAL…TITSLGPEDY (143 aa)) lie on the Lumenal, thylakoid side of the membrane. The chain crosses the membrane as a helical span at residues 183–203 (VVAAGXAFLAYLLVPPVWSLV). Topologically, residues 204 to 395 (SSSLRGYKGD…TRKLLPGGVD (192 aa)) are stromal. Residues 224–345 (TTQGYVLIDV…WAQSRLGTDS (122 aa)) enclose the Rhodanese domain. Thr-377 carries the phosphothreonine modification.

Phosphorylated in both bundle sheath and mesophyll cells, under both low and high light regimes (70 vs 900 umol photons/m-2/s).

Its subcellular location is the plastid. It localises to the chloroplast thylakoid membrane. In terms of biological role, modulates cytoplasmic Ca(2+) concentration and is crucial for proper stomatal regulation in response to elevated levels of external Ca(2+). May function by regulating concentrations of inositol 1,4,5-trisphosphate (IP3), which in turn triggers release of Ca(2+) from internal stores. May play a role in de-etiolation. The polypeptide is Calcium sensing receptor, chloroplastic (Zea mays (Maize)).